A 475-amino-acid polypeptide reads, in one-letter code: Ras-GEF domain-containing family member 1A (475 aa).

One can recognise an N-terminal Ras-GEF domain in the interval 33–164 (QDGSLVSGSL…SISQMTQNVL (132 aa)). Residues 208–455 (DPLILAQQLT…FLASFENEGP (248 aa)) enclose the Ras-GEF domain.

Guanine nucleotide exchange factor (GEF) with specificity for rap2a and other Ras family proteins (in vitro). Plays a role in cell migration. The sequence is that of Ras-GEF domain-containing family member 1A (rasgef1a) from Xenopus tropicalis (Western clawed frog).